Here is a 348-residue protein sequence, read N- to C-terminus: MQKKDILFSIGWPLSSLYAGIMKLRCLLYRRGLFRQHHFPVPVISVGNLTMGGTGKTPVTHYIAKLLLEHGLQPAIISRGYSGKSGGEVNIVSDGQRILLSAEQAGDEPYMLASMLAGVIVITGKKRYLSCKYAVEKMQAEVIILDDGFQHLAVARNLDLVLFDAQTGMGNNRVFPGGDLREARFALDRADAFLITGKCPREEEELLAIELELQHELPQCPLFSVYRTEGVFYSAKQEKVVTHLPKKVFAFCGIANPERFHHDLEKQGFSLVGFKAFSDHQQYTGQCIEEIVKEAKKGGAQAIITTDKDLVKIDSFATELPLYSARPRTTISTDFDELILKTCASFGE.

50 to 57 serves as a coordination point for ATP; sequence TMGGTGKT.

It belongs to the LpxK family.

The enzyme catalyses a lipid A disaccharide + ATP = a lipid IVA + ADP + H(+). The protein operates within glycolipid biosynthesis; lipid IV(A) biosynthesis; lipid IV(A) from (3R)-3-hydroxytetradecanoyl-[acyl-carrier-protein] and UDP-N-acetyl-alpha-D-glucosamine: step 6/6. In terms of biological role, transfers the gamma-phosphate of ATP to the 4'-position of a tetraacyldisaccharide 1-phosphate intermediate (termed DS-1-P) to form tetraacyldisaccharide 1,4'-bis-phosphate (lipid IVA). The protein is Tetraacyldisaccharide 4'-kinase of Desulfotalea psychrophila (strain LSv54 / DSM 12343).